The following is a 115-amino-acid chain: NADH-ubiquinone oxidoreductase chain 3 (115 aa).

Transmembrane regions (helical) follow at residues 3 to 23 (LVMA…IAFW), 55 to 75 (FFLV…LLPL), and 86 to 106 (TMLI…AYEW).

It belongs to the complex I subunit 3 family. In terms of assembly, core subunit of respiratory chain NADH dehydrogenase (Complex I) which is composed of 45 different subunits. Interacts with TMEM186. Interacts with TMEM242.

The protein localises to the mitochondrion inner membrane. It catalyses the reaction a ubiquinone + NADH + 5 H(+)(in) = a ubiquinol + NAD(+) + 4 H(+)(out). Core subunit of the mitochondrial membrane respiratory chain NADH dehydrogenase (Complex I) which catalyzes electron transfer from NADH through the respiratory chain, using ubiquinone as an electron acceptor. Essential for the catalytic activity of complex I. The protein is NADH-ubiquinone oxidoreductase chain 3 of Hippopotamus amphibius (Hippopotamus).